Consider the following 253-residue polypeptide: MPSDNQKNTNDLPLAGPRHVAIIMDGNGRWAKSRGKMRIFGHQAGVKAVRRSVSFAVNHGLDALTLYAFSSENWNRPAQEVSALMELFVRALDSEVKSLHKHNVRLRVIGDIGRFSPRLQERIRRSEVLTEKNQGLTLNIAANYGGRWDIIQGVRQLAEQVQEGILRPDSINEASLCQYICLNDLAPVDLVIRTGGEHRISNFLLWQIAYAELYFTDVLWPDFDEQVFEGALNAFAQRERRFGGTTPIDADAS.

Aspartate 25 is an active-site residue. Mg(2+) is bound at residue aspartate 25. Substrate contacts are provided by residues 26-29, tryptophan 30, arginine 38, histidine 42, and 70-72; these read GNGR and SSE. Asparagine 73 serves as the catalytic Proton acceptor. Substrate contacts are provided by tryptophan 74, arginine 76, and arginine 193. Residue histidine 198 coordinates Mg(2+). Position 199-201 (199-201) interacts with substrate; that stretch reads RIS. Glutamate 212 provides a ligand contact to Mg(2+).

It belongs to the UPP synthase family. In terms of assembly, homodimer. Requires Mg(2+) as cofactor.

The catalysed reaction is 8 isopentenyl diphosphate + (2E,6E)-farnesyl diphosphate = di-trans,octa-cis-undecaprenyl diphosphate + 8 diphosphate. Its function is as follows. Catalyzes the sequential condensation of isopentenyl diphosphate (IPP) with (2E,6E)-farnesyl diphosphate (E,E-FPP) to yield (2Z,6Z,10Z,14Z,18Z,22Z,26Z,30Z,34E,38E)-undecaprenyl diphosphate (di-trans,octa-cis-UPP). UPP is the precursor of glycosyl carrier lipid in the biosynthesis of bacterial cell wall polysaccharide components such as peptidoglycan and lipopolysaccharide. This Pectobacterium atrosepticum (strain SCRI 1043 / ATCC BAA-672) (Erwinia carotovora subsp. atroseptica) protein is Ditrans,polycis-undecaprenyl-diphosphate synthase ((2E,6E)-farnesyl-diphosphate specific).